Reading from the N-terminus, the 635-residue chain is Phosphatidylserine decarboxylase proenzyme 2 (635 aa).

In terms of domain architecture, C2 spans 20 to 146 (KLQKFRIHRR…VVQEPESTCK (127 aa)). 2 consecutive EF-hand domains span residues 174–209 (TERRFAKRILSIVDYNEDGQLSFSEFSDLIKAFGNL) and 210–245 (VAANKKEELFKAADLNGDGVVTIDELAALLALQQEQ). The Ca(2+) site is built by D187, N189, D191, Q193, E198, D223, N225, D227, and E234. Catalysis depends on charge relay system; for autoendoproteolytic cleavage activity residues D443, H499, and S587. The Schiff-base intermediate with substrate; via pyruvic acid; for decarboxylase activity role is filled by S587. A Pyruvic acid (Ser); by autocatalysis modification is found at S587.

It belongs to the phosphatidylserine decarboxylase family. PSD-B subfamily. Eukaryotic type II sub-subfamily. As to quaternary structure, heterodimer of a large membrane-associated beta subunit and a small pyruvoyl-containing alpha subunit. Pyruvate is required as a cofactor. In terms of processing, is synthesized initially as an inactive proenzyme. Formation of the active enzyme involves a self-maturation process in which the active site pyruvoyl group is generated from an internal serine residue via an autocatalytic post-translational modification. Two non-identical subunits are generated from the proenzyme in this reaction, and the pyruvate is formed at the N-terminus of the alpha chain, which is derived from the carboxyl end of the proenzyme. The autoendoproteolytic cleavage occurs by a canonical serine protease mechanism, in which the side chain hydroxyl group of the serine supplies its oxygen atom to form the C-terminus of the beta chain, while the remainder of the serine residue undergoes an oxidative deamination to produce ammonia and the pyruvoyl prosthetic group on the alpha chain. During this reaction, the Ser that is part of the protease active site of the proenzyme becomes the pyruvoyl prosthetic group, which constitutes an essential element of the active site of the mature decarboxylase. As to expression, highly expressed in flowers and at lower levels in leaves.

Its subcellular location is the vacuole membrane. The catalysed reaction is a 1,2-diacyl-sn-glycero-3-phospho-L-serine + H(+) = a 1,2-diacyl-sn-glycero-3-phosphoethanolamine + CO2. The protein operates within phospholipid metabolism; phosphatidylethanolamine biosynthesis; phosphatidylethanolamine from CDP-diacylglycerol: step 2/2. In terms of biological role, catalyzes the formation of phosphatidylethanolamine (PtdEtn) from phosphatidylserine (PtdSer). Plays a central role in phospholipid metabolism and in the interorganelle trafficking of phosphatidylserine. Contributes only to a minor proportion of PtdEtn production. The polypeptide is Phosphatidylserine decarboxylase proenzyme 2 (PSD2) (Arabidopsis thaliana (Mouse-ear cress)).